The chain runs to 408 residues: 1-deoxy-D-xylulose 5-phosphate reductoisomerase (408 aa).

Thr26, Gly27, Ser28, Ile29, and Asn143 together coordinate NADPH. Position 144 (Lys144) interacts with 1-deoxy-D-xylulose 5-phosphate. Residue Glu145 coordinates NADPH. Asp167 lines the Mn(2+) pocket. 1-deoxy-D-xylulose 5-phosphate-binding residues include Ser168, Glu169, Ser193, and His216. Glu169 contributes to the Mn(2+) binding site. Residue Gly222 coordinates NADPH. Residues Ser229, Asn234, Lys235, and Glu238 each contribute to the 1-deoxy-D-xylulose 5-phosphate site. Residue Glu238 participates in Mn(2+) binding.

The protein belongs to the DXR family. Requires Mg(2+) as cofactor. Mn(2+) is required as a cofactor.

It catalyses the reaction 2-C-methyl-D-erythritol 4-phosphate + NADP(+) = 1-deoxy-D-xylulose 5-phosphate + NADPH + H(+). It participates in isoprenoid biosynthesis; isopentenyl diphosphate biosynthesis via DXP pathway; isopentenyl diphosphate from 1-deoxy-D-xylulose 5-phosphate: step 1/6. Catalyzes the NADPH-dependent rearrangement and reduction of 1-deoxy-D-xylulose-5-phosphate (DXP) to 2-C-methyl-D-erythritol 4-phosphate (MEP). The chain is 1-deoxy-D-xylulose 5-phosphate reductoisomerase from Corynebacterium jeikeium (strain K411).